Reading from the N-terminus, the 668-residue chain is Fructose-1,6-bisphosphatase class 3 (668 aa).

The protein belongs to the FBPase class 3 family. Mn(2+) is required as a cofactor.

It catalyses the reaction beta-D-fructose 1,6-bisphosphate + H2O = beta-D-fructose 6-phosphate + phosphate. The protein operates within carbohydrate biosynthesis; gluconeogenesis. This chain is Fructose-1,6-bisphosphatase class 3, found in Clostridium botulinum (strain Loch Maree / Type A3).